Reading from the N-terminus, the 130-residue chain is Glycine cleavage system H protein (130 aa).

The region spanning 24–106 is the Lipoyl-binding domain; sequence SVTVGITEHA…YGDGWIMRIQ (83 aa). K65 carries the N6-lipoyllysine modification.

It belongs to the GcvH family. In terms of assembly, the glycine cleavage system is composed of four proteins: P, T, L and H. Requires (R)-lipoate as cofactor.

In terms of biological role, the glycine cleavage system catalyzes the degradation of glycine. The H protein shuttles the methylamine group of glycine from the P protein to the T protein. This chain is Glycine cleavage system H protein, found in Halorhodospira halophila (strain DSM 244 / SL1) (Ectothiorhodospira halophila (strain DSM 244 / SL1)).